The following is a 629-amino-acid chain: Probable potassium transport system protein Kup 3 (629 aa).

A run of 12 helical transmembrane segments spans residues 20 to 40, 61 to 81, 106 to 126, 143 to 163, 171 to 191, 209 to 229, 253 to 273, 291 to 311, 343 to 363, 372 to 392, 400 to 420, and 425 to 445; these read LSLS…LYTF, VSLI…HFAL, PFII…GTIT, PSLK…LFAI, IGKA…ILGA, GLSF…GVFL, WFGL…ALVL, FLLP…QAII, IYIG…TIGF, AYGI…FIAL, IITS…FFAA, and FING…MMYI.

It belongs to the HAK/KUP transporter (TC 2.A.72) family.

The protein resides in the cell inner membrane. It catalyses the reaction K(+)(in) + H(+)(in) = K(+)(out) + H(+)(out). Transport of potassium into the cell. Likely operates as a K(+):H(+) symporter. The polypeptide is Probable potassium transport system protein Kup 3 (Legionella pneumophila subsp. pneumophila (strain Philadelphia 1 / ATCC 33152 / DSM 7513)).